Here is a 152-residue protein sequence, read N- to C-terminus: Ninjurin-1 (152 aa).

The residue at position 1 (Met1) is an N-acetylmethionine. Positions 1–10 are enriched in acidic residues; sequence MDPGTEEYEL. Residues 1 to 30 form a disordered region; it reads MDPGTEEYELNGDLRPGSPGSPDASPPRWG. The Extracellular segment spans residues 1 to 78; the sequence is MDPGTEEYEL…EQGNEFAFFV (78 aa). Residues 16–27 show a composition bias toward low complexity; the sequence is PGSPGSPDASPP. Phosphoserine occurs at positions 18, 21, and 25. The tract at residues 26–37 is N-terminal adhesion motif; it reads PPRWGLRNRPIN. The segment at 40–69 is required to induce plasma membrane rupture; it reads HYANKKSAAESMLDIALLMANASQLKAVVE. The tract at residues 44 to 55 is helix alpha1; sequence KKSAAESMLDIA. Positions 58–74 are helix alpha2; the sequence is MANASQLKAVVEQGNEF. Asn60 is a glycosylation site (N-linked (GlcNAc...) asparagine). A helical transmembrane segment spans residues 79–103; the sequence is PLVVLISISLVLQIGVGVLLIFLVK. The Cytoplasmic portion of the chain corresponds to 104–113; that stretch reads YDLNNPAKHA. The chain crosses the membrane as a helical span at residues 114-138; that stretch reads KLDFLNNLATGLVFIIVVVNIFITA. The Extracellular segment spans residues 139 to 152; that stretch reads FGVQKPVMDVAPRQ.

This sequence belongs to the ninjurin family. Homodimer; in absence of death stimuli, forms an inactive homodimer. Homooligomer; in response to death stimuli, homooligomerizes into long, highly branched filaments and large, ring-shaped structures in the membrane. The topology shown in the entry corresponds to the activated form. Cleaved by MMP9 protease to generate the Secreted ninjurin-1 form. In terms of processing, N-linked glycosylation is required for homooligomerization.

The protein resides in the cell membrane. It is found in the synaptic cell membrane. The protein localises to the secreted. Its activity is regulated as follows. In response to death stimuli, homooligomerizes and disrupts membrane integrity by introducing the hydrophilic faces of alpha1 and alpha2 helices into the hydrophobic membrane. Homooligomerization and ability to mediate plasma membrane rupture is inhibited by glycine; it is unclear whether glycine directly or indirectly inhibits homooligomerization. In normal conditions, NINJ1 is autoinhibited via formation of a homodimer: in the inactive homodimer, the alpha1 and alpha2 helices (residues 44-74) form a single transmembrane region without a kink, in which hydrophilic faces of alpha1 and alpha2 helices are sequestered. Its function is as follows. Effector of various programmed cell death, such as pyroptosis and necroptosis, which mediates plasma membrane rupture (cytolysis). Oligomerizes in response to death stimuli and forms ring-like structures on the plasma membrane: acts by cutting and shedding membrane disks, like a cookie cutter, leading to membrane damage and loss that cannot be repaired by the cell. Plasma membrane rupture leads to release intracellular molecules named damage-associated molecular patterns (DAMPs) that propagate the inflammatory response. Mechanistically, mediates plasma membrane rupture by introducing hydrophilic faces of 2 alpha helices into the hydrophobic membrane. Induces plasma membrane rupture downstream of Gasdermin (GSDMA, GSDMB, GSDMC, GSDMD, or GSDME) or MLKL during pyroptosis or necroptosis, respectively. Acts as an effector of PANoptosis downstream of CASP1, CASP4, CASP8 and RIPK3. Also induces plasma membrane rupture in response to cell swelling caused by osmotic stress and ferroptosis downstream of lipid peroxidation. Acts as a regulator of Toll-like receptor 4 (TLR4) signaling triggered by lipopolysaccharide (LPS) during systemic inflammation; directly binds LPS. Involved in leukocyte migration during inflammation by promoting transendothelial migration of macrophages via homotypic binding. Promotes the migration of monocytes across the brain endothelium to central nervous system inflammatory lesions. Also acts as a homophilic transmembrane adhesion molecule involved in various processes such as axonal growth, cell chemotaxis and angiogenesis. Promotes cell adhesion by mediating homophilic interactions via its extracellular N-terminal adhesion motif (N-NAM). Involved in the progression of the inflammatory stress by promoting cell-to-cell interactions between immune cells and endothelial cells. Plays a role in nerve regeneration by promoting maturation of Schwann cells. Acts as a regulator of angiogenesis. Promotes the formation of new vessels by mediating the interaction between capillary pericyte cells and endothelial cells. Promotes osteoclasts development by enhancing the survival of prefusion osteoclasts. Also involved in striated muscle growth and differentiation. Functionally, secreted form generated by cleavage, which has chemotactic activity. Acts as an anti-inflammatory mediator by promoting monocyte recruitment, thereby ameliorating atherosclerosis. This Rattus norvegicus (Rat) protein is Ninjurin-1.